The sequence spans 634 residues: Chaperone protein HtpG (634 aa).

Positions 1–344 (MSETVSQNKE…SNDLPLNVSR (344 aa)) are a; substrate-binding. Residues 345-561 (EILQDNKVTQ…DYEMGTQMAK (217 aa)) form a b region. The c stretch occupies residues 562 to 634 (LLAAAGQAVP…GAINKLLTKV (73 aa)).

Belongs to the heat shock protein 90 family. As to quaternary structure, homodimer.

The protein resides in the cytoplasm. Molecular chaperone. Has ATPase activity. This chain is Chaperone protein HtpG, found in Vibrio parahaemolyticus serotype O3:K6 (strain RIMD 2210633).